The following is a 455-amino-acid chain: uncharacterized protein (455 aa).

Transmembrane regions (helical) follow at residues 19-39 (FSLFSLTWPIFIEVSLYMFMG), 63-83 (ILNLIIVMFSFIATGTTVIIS), 106-126 (FFISLAISAVVFFAAVPLLHM), 140-160 (FLQVVGGLSFIQALIMTFSAI), 173-195 (VTIGMNILNIAGNFVVIFGLFGF), 200-222 (VAGVAMSTSIARVIGLIAMIVIV), 265-285 (MIVTYFIAIMGAQALTTKVYT), 288-308 (ITMFILLFGTAISQGTQILIG), 324-344 (MKSLYWALGIAAATSVLMTIF), 348-368 (LIGLFTQSPDIIATASLLIAM), 388-408 (AAGDAKFPVYMAMISMWGIGL), and 410-430 (LAYLFGIHLGFGLAGIWISFI).

The protein belongs to the multi antimicrobial extrusion (MATE) (TC 2.A.66.1) family.

The protein resides in the cell membrane. This is an uncharacterized protein from Bacillus subtilis (strain 168).